Here is a 364-residue protein sequence, read N- to C-terminus: Aminomethyltransferase (364 aa).

This sequence belongs to the GcvT family. The glycine cleavage system is composed of four proteins: P, T, L and H.

It carries out the reaction N(6)-[(R)-S(8)-aminomethyldihydrolipoyl]-L-lysyl-[protein] + (6S)-5,6,7,8-tetrahydrofolate = N(6)-[(R)-dihydrolipoyl]-L-lysyl-[protein] + (6R)-5,10-methylene-5,6,7,8-tetrahydrofolate + NH4(+). Its function is as follows. The glycine cleavage system catalyzes the degradation of glycine. This Shewanella baltica (strain OS155 / ATCC BAA-1091) protein is Aminomethyltransferase.